We begin with the raw amino-acid sequence, 163 residues long: Lysosomal enzyme trafficking factor (163 aa).

Helical transmembrane passes span 40 to 60 (MGWI…YYVF) and 98 to 118 (LPFW…FLFL).

Belongs to the LYSET family. As to quaternary structure, interacts with GNPTAB; this interaction is important for proper localization of GNPTAB in Golgi stacks. Interacts with MBTPS1.

The protein localises to the golgi apparatus membrane. In terms of biological role, required for mannose-6-phosphate-dependent trafficking of lysosomal enzymes. LYSET bridges GlcNAc-1-phosphate transferase (GNPTAB), to the membrane-bound transcription factor site-1 protease (MBTPS1), thus allowing proteolytic activation of the GNPTAB. GNPTAB is involved in the regulation of M6P-dependent Golgi-to-lysosome trafficking of lysosomal enzymes. LYSET is thus an essential factor for maturation and delivery of lysosomal hydrolases. Plays an essential function for cells that depend on lysosomal catabolism to generate nutrients. In Mus musculus (Mouse), this protein is Lysosomal enzyme trafficking factor (Lyset).